Consider the following 96-residue polypeptide: Co-chaperonin GroES (96 aa).

It belongs to the GroES chaperonin family. As to quaternary structure, heptamer of 7 subunits arranged in a ring. Interacts with the chaperonin GroEL.

It is found in the cytoplasm. Functionally, together with the chaperonin GroEL, plays an essential role in assisting protein folding. The GroEL-GroES system forms a nano-cage that allows encapsulation of the non-native substrate proteins and provides a physical environment optimized to promote and accelerate protein folding. GroES binds to the apical surface of the GroEL ring, thereby capping the opening of the GroEL channel. This Haemophilus influenzae (strain ATCC 51907 / DSM 11121 / KW20 / Rd) protein is Co-chaperonin GroES.